The chain runs to 1040 residues: Multidrug resistance protein MdtB (1040 aa).

Transmembrane regions (helical) follow at residues 16–36, 347–367, 369–389, 396–416, 440–460, 472–492, 537–557, 863–883, 888–908, 911–931, 968–988, and 998–1018; these read FIMR…AGII, LMMA…NIPA, IIPG…MVFL, LTLM…IVVI, IGFT…PLLF, FAIT…TLTP, WLTL…WVFI, LGST…VLGI, FIHP…ALLA, IAGS…IGIV, ILMT…STGV, and IGMV…TPVI.

Belongs to the resistance-nodulation-cell division (RND) (TC 2.A.6) family. MdtB subfamily. Part of a tripartite efflux system composed of MdtA, MdtB and MdtC. MdtB forms a heteromultimer with MdtC.

The protein localises to the cell inner membrane. Functionally, the MdtABC tripartite complex confers resistance against novobiocin and deoxycholate. The polypeptide is Multidrug resistance protein MdtB (Escherichia coli O17:K52:H18 (strain UMN026 / ExPEC)).